The sequence spans 420 residues: Signal recognition particle receptor FtsY (420 aa).

Residues 28-62 (DLDRAMGKVAPDNKKTRDAKAAADARLAAEAEEAK) are compositionally biased toward basic and acidic residues. The disordered stretch occupies residues 28-118 (DLDRAMGKVA…PETPESVGSR (91 aa)). Over residues 63-104 (AATAAEPAKSAESAKAEPAPAAQAEPEPAAAPKPESQPASKP) the composition is skewed to low complexity. Residues 227–234 (GVNGTGKT), 310–314 (DTAGR), and 372–375 (SKLD) contribute to the GTP site.

This sequence belongs to the GTP-binding SRP family. FtsY subfamily. Part of the signal recognition particle protein translocation system, which is composed of SRP and FtsY.

It localises to the cell membrane. The protein localises to the cytoplasm. It carries out the reaction GTP + H2O = GDP + phosphate + H(+). In terms of biological role, involved in targeting and insertion of nascent membrane proteins into the cytoplasmic membrane. Acts as a receptor for the complex formed by the signal recognition particle (SRP) and the ribosome-nascent chain (RNC). The sequence is that of Signal recognition particle receptor FtsY from Bifidobacterium longum (strain NCC 2705).